The sequence spans 330 residues: Mas-related G-protein coupled receptor member X2 (330 aa).

Topologically, residues 1-33 (MDPTTLVWGTESTTMNGNDQALPLLCGKETLIL) are extracellular. Residues 34-54 (VVLILFIALVGLVGNAFVLWL) traverse the membrane as a helical segment. Residues 55–63 (LGFRMRRNA) are Cytoplasmic-facing. The chain crosses the membrane as a helical span at residues 64–84 (FSVYVLSLAGADFLFLCFPMI). At 85–96 (NCLAYLINFFHS) the chain is on the extracellular side. The helical transmembrane segment at 97-117 (ISINFPSFFTTVMTCAYLAGL) threads the bilayer. Topologically, residues 118–144 (SMLSAISTERCLSVLWPIWYRSRRPRH) are cytoplasmic. The chain crosses the membrane as a helical span at residues 145–165 (LSAVMCVLLWALSLLLSILEG). Residues 166–184 (KFCGFLFSDGDSGWCQTFD) are Extracellular-facing. The chain crosses the membrane as a helical span at residues 185–205 (FITAAWLMFLFVVLCGSSLAL). Residues 206–228 (LVRILCGSRGLPLTRLYLTILLT) lie on the Cytoplasmic side of the membrane. The chain crosses the membrane as a helical span at residues 229–249 (VLIFLLCGLPFGIQWFLILWI). At 250 to 264 (WKNSDVLFCHIHPVS) the chain is on the extracellular side. A helical membrane pass occupies residues 265 to 285 (VVLSSFNSSANPIIYFFVGSF). The Cytoplasmic segment spans residues 286 to 330 (RKQWRLRQPVLKLALQRALQDTAEVDHSEGCFSQGTLEMSGSSLV).

It belongs to the G-protein coupled receptor 1 family. Mas subfamily.

Its subcellular location is the cell membrane. In terms of biological role, mast cell-specific receptor for basic secretagogues, i.e. cationic amphiphilic drugs, as well as endo- or exogenous peptides, consisting of a basic head group and a hydrophobic core. Recognizes and binds small molecules containing a cyclized tetrahydroisoquinoline (THIQ), such as non-steroidal neuromuscular blocking drugs (NMBDs), including tubocurarine and atracurium. In response to these compounds, mediates pseudo-allergic reactions characterized by histamine release, inflammation and airway contraction. The chain is Mas-related G-protein coupled receptor member X2 (MRGPRX2) from Trachypithecus francoisi (Francois' leaf monkey).